The following is a 490-amino-acid chain: Polyamine transporter RMV1 (490 aa).

Positions methionine 1 to glutamate 21 are enriched in polar residues. Residues methionine 1–aspartate 38 are disordered. 12 helical membrane passes run isoleucine 53–isoleucine 73, leucine 83–isoleucine 103, glycine 116–valine 136, isoleucine 160–leucine 180, leucine 188–valine 208, glycine 231–tryptophan 248, leucine 273–leucine 293, phenylalanine 303–alanine 323, threonine 363–phenylalanine 383, isoleucine 386–valine 406, valine 425–phenylalanine 445, and leucine 448–leucine 468.

Belongs to the amino acid-polyamine-organocation (APC) superfamily. Polyamine:cation symporter (PHS) (TC 2.A.3.12) family.

The protein resides in the cell membrane. Its function is as follows. Cell membrane polyamine/proton symporter involved in the polyamine uptake in cells. Possesses high affinity for spermine and spermidine and lower affinity for putrescine. Transports paraquat, a polyamine analog, and thus confers sensitivity to this chemical which is used as a herbicide. This chain is Polyamine transporter RMV1 (RMV1), found in Arabidopsis thaliana (Mouse-ear cress).